The primary structure comprises 353 residues: Glycerol-3-phosphate dehydrogenase [NAD(+)], cytoplasmic (353 aa).

Ala-2 bears the Blocked amino end (Ala) mark. NAD(+) is bound by residues Gly-11 to Gly-16, Phe-98, Lys-121, and Ala-155. Lys-121 contributes to the substrate binding site. Lys-206 acts as the Proton acceptor in catalysis. Arg-270 and Gln-299 together coordinate NAD(+). Arg-270–Asn-271 is a substrate binding site.

Belongs to the NAD-dependent glycerol-3-phosphate dehydrogenase family. As to quaternary structure, homodimer.

The protein localises to the cytoplasm. The enzyme catalyses sn-glycerol 3-phosphate + NAD(+) = dihydroxyacetone phosphate + NADH + H(+). Its pathway is phospholipid metabolism; alpha-glycerophosphate cycle. This Drosophila virilis (Fruit fly) protein is Glycerol-3-phosphate dehydrogenase [NAD(+)], cytoplasmic.